A 499-amino-acid chain; its full sequence is ATP synthase subunit beta, chloroplastic (499 aa).

170–177 (GGAGVGKT) contacts ATP.

This sequence belongs to the ATPase alpha/beta chains family. F-type ATPases have 2 components, CF(1) - the catalytic core - and CF(0) - the membrane proton channel. CF(1) has five subunits: alpha(3), beta(3), gamma(1), delta(1), epsilon(1). CF(0) has four main subunits: a(1), b(1), b'(1) and c(9-12).

It localises to the plastid. Its subcellular location is the chloroplast thylakoid membrane. The enzyme catalyses ATP + H2O + 4 H(+)(in) = ADP + phosphate + 5 H(+)(out). Produces ATP from ADP in the presence of a proton gradient across the membrane. The catalytic sites are hosted primarily by the beta subunits. This chain is ATP synthase subunit beta, chloroplastic, found in Ipomoea purpurea (Common morning glory).